The following is a 171-amino-acid chain: Zinc finger A20 and AN1 domain-containing stress-associated protein 8 (171 aa).

Residues 11-45 form an A20-type zinc finger; the sequence is PEGPILCINNCGFFGSAATMNMCSKCHKEMIMKQE. Zn(2+) contacts are provided by C17, C21, C33, C36, C112, C115, C126, C128, C133, H136, H142, and C144. Residues 106–152 form an AN1-type zinc finger; the sequence is REGPNRCSTCRKRVGLTGFNCRCGNLYCAMHRYSDKHDCQFDYRTAA.

Its function is as follows. May be involved in environmental stress response. In Oryza sativa subsp. indica (Rice), this protein is Zinc finger A20 and AN1 domain-containing stress-associated protein 8 (SAP8).